The chain runs to 63 residues: Large ribosomal subunit protein bL28 (63 aa).

It belongs to the bacterial ribosomal protein bL28 family.

The sequence is that of Large ribosomal subunit protein bL28 from Syntrophotalea carbinolica (strain DSM 2380 / NBRC 103641 / GraBd1) (Pelobacter carbinolicus).